The chain runs to 188 residues: Elongation factor P-like protein (188 aa).

The protein belongs to the elongation factor P family.

The polypeptide is Elongation factor P-like protein (Marinobacter nauticus (strain ATCC 700491 / DSM 11845 / VT8) (Marinobacter aquaeolei)).